Here is a 126-residue protein sequence, read N- to C-terminus: uncharacterized protein (126 aa).

Over 1 to 9 (MCTYIITQS) the chain is Extracellular. A helical membrane pass occupies residues 10-30 (FFFLPCLSFLFFKLVGFFDSV). Residues 31 to 73 (FTAGKSLRIMFELPIFDKLTSCFAAIDCSATSLDIPFAEEELF) are Cytoplasmic-facing. Residues 74–94 (LMLVSEPVLIPFLFVFEFMLI) form a helical membrane-spanning segment. Topologically, residues 95–126 (CKPCGSRSRFGFPVKNVSDFEETLEFDPTLLV) are extracellular.

The protein localises to the membrane. This is an uncharacterized protein from Saccharomyces cerevisiae (strain ATCC 204508 / S288c) (Baker's yeast).